A 467-amino-acid chain; its full sequence is MFEKMTIEDCLSKESDLINLSLERIKCIDSAVKSFITVVDKQEELEGPYKGIPIAIKDNITTKNIRTTCGSKMLENYTPPYDATCVKRLKNYGFAIVGKTNLDEFAMGSSTERSAFFVTRNPWDLDYVAGGSSGGSAAAVASGEVVAALGSDTGGSVRQPAAFCGIVGFKPTYGLVSRYGLVAFASSLDQIGPMTKSVRDAALIMEVIAGKDPMDSTTVSKKLDFLTHIEDGISGMKFAVPEEVYKYEQLDREVSDRFEEALKTAEKLGAKVSRVKIPTIKYAVATYYIIAPAEASSNLARYDGVKYGLRIEEPGLMDTYMKTRNVGFGEEVRRRIFLGTFTLSAAYYEAYFGKAQKVRKLLSDDLNRVLADFDAILTPTSPSPAFKIGSVADPLTYYLMDIFTIPANLSGLPAISVPFGFAKNLPVGLQIMGRRFDDPKVLAIARAFEKYSPYNINGRIPLPVVRI.

Active-site charge relay system residues include K57 and S132. Residue S156 is the Acyl-ester intermediate of the active site.

Belongs to the amidase family. GatA subfamily. As to quaternary structure, heterotrimer of A, B and C subunits.

It catalyses the reaction L-glutamyl-tRNA(Gln) + L-glutamine + ATP + H2O = L-glutaminyl-tRNA(Gln) + L-glutamate + ADP + phosphate + H(+). Its function is as follows. Allows the formation of correctly charged Gln-tRNA(Gln) through the transamidation of misacylated Glu-tRNA(Gln) in organisms which lack glutaminyl-tRNA synthetase. The reaction takes place in the presence of glutamine and ATP through an activated gamma-phospho-Glu-tRNA(Gln). The sequence is that of Glutamyl-tRNA(Gln) amidotransferase subunit A from Pseudothermotoga lettingae (strain ATCC BAA-301 / DSM 14385 / NBRC 107922 / TMO) (Thermotoga lettingae).